A 242-amino-acid chain; its full sequence is UPF0309 protein BMEA_B0892 (242 aa).

The 185-residue stretch at 30–214 (AADLIAAAAR…ARLVGEGDAP (185 aa)) folds into the SIS domain.

The protein belongs to the UPF0309 family.

The sequence is that of UPF0309 protein BMEA_B0892 from Brucella melitensis biotype 2 (strain ATCC 23457).